We begin with the raw amino-acid sequence, 375 residues long: 23S rRNA (uracil(747)-C(5))-methyltransferase RlmC (375 aa).

[4Fe-4S] cluster-binding residues include C3, C11, C14, and C87. S-adenosyl-L-methionine-binding residues include Q212, F241, E262, and N307. C334 serves as the catalytic Nucleophile.

This sequence belongs to the class I-like SAM-binding methyltransferase superfamily. RNA M5U methyltransferase family. RlmC subfamily.

The catalysed reaction is uridine(747) in 23S rRNA + S-adenosyl-L-methionine = 5-methyluridine(747) in 23S rRNA + S-adenosyl-L-homocysteine + H(+). In terms of biological role, catalyzes the formation of 5-methyl-uridine at position 747 (m5U747) in 23S rRNA. This chain is 23S rRNA (uracil(747)-C(5))-methyltransferase RlmC, found in Shigella boydii serotype 18 (strain CDC 3083-94 / BS512).